The sequence spans 696 residues: Elongation factor G (696 aa).

Residues 8-290 (ERYRNIGIMA…AVLDYLPSPL (283 aa)) form the tr-type G domain. Residues 17–24 (AHIDAGKT), 88–92 (DTPGH), and 142–145 (NKMD) each bind GTP.

Belongs to the TRAFAC class translation factor GTPase superfamily. Classic translation factor GTPase family. EF-G/EF-2 subfamily.

It localises to the cytoplasm. Its function is as follows. Catalyzes the GTP-dependent ribosomal translocation step during translation elongation. During this step, the ribosome changes from the pre-translocational (PRE) to the post-translocational (POST) state as the newly formed A-site-bound peptidyl-tRNA and P-site-bound deacylated tRNA move to the P and E sites, respectively. Catalyzes the coordinated movement of the two tRNA molecules, the mRNA and conformational changes in the ribosome. The polypeptide is Elongation factor G (Nitrosomonas eutropha (strain DSM 101675 / C91 / Nm57)).